A 213-amino-acid chain; its full sequence is Guanylate kinase (213 aa).

The Guanylate kinase-like domain occupies 12-190 (GLCLVVAAPS…AIDQVRTILH (179 aa)). 19-26 (APSGAGKS) provides a ligand contact to ATP.

This sequence belongs to the guanylate kinase family.

Its subcellular location is the cytoplasm. It catalyses the reaction GMP + ATP = GDP + ADP. Essential for recycling GMP and indirectly, cGMP. The protein is Guanylate kinase of Granulibacter bethesdensis (strain ATCC BAA-1260 / CGDNIH1).